A 160-amino-acid polypeptide reads, in one-letter code: Serine-protein kinase RsbW (160 aa).

Belongs to the anti-sigma-factor family.

It catalyses the reaction L-seryl-[protein] + ATP = O-phospho-L-seryl-[protein] + ADP + H(+). The catalysed reaction is L-threonyl-[protein] + ATP = O-phospho-L-threonyl-[protein] + ADP + H(+). In terms of biological role, negative regulator of sigma-B activity. Phosphorylates and inactivates its specific antagonist protein, RsbV. Upon phosphorylation of RsbV, RsbW is released and binds to sigma-B, thereby blocking its ability to form an RNA polymerase holoenzyme (E-sigma-B). The protein is Serine-protein kinase RsbW of Bacillus anthracis (strain A0248).